Reading from the N-terminus, the 122-residue chain is Serum amyloid A-1 protein (122 aa).

The first 18 residues, 1 to 18 (MKPFVAIIFCFLILGVDS), serve as a signal peptide directing secretion. An important for amyloid formation region spans residues 19 to 45 (QRWFQFMKEAGQGTRDMWRAYTDMREA). The tract at residues 100 to 122 (ANEWGRSGKDPNFFRPPGLPSKY) is disordered.

The protein belongs to the SAA family. As to quaternary structure, homohexamer; dimer of trimers. Can form amyloid fibrils after partial proteolysis; the native, undenatured protein does not form amyloid fibrils (in vitro). Apolipoprotein of the HDL complex. Binds to heparin. In terms of tissue distribution, detected in liver, spleen and kidney.

It localises to the secreted. Major acute phase protein. The chain is Serum amyloid A-1 protein (SAA1) from Mesocricetus auratus (Golden hamster).